A 270-amino-acid polypeptide reads, in one-letter code: 3-methyl-2-oxobutanoate hydroxymethyltransferase (270 aa).

The Mg(2+) site is built by aspartate 41 and aspartate 80. Residues 41–42 (DS), aspartate 80, and lysine 109 each bind 3-methyl-2-oxobutanoate. Glutamate 111 contributes to the Mg(2+) binding site. Glutamate 178 functions as the Proton acceptor in the catalytic mechanism.

The protein belongs to the PanB family. Homodecamer; pentamer of dimers. The cofactor is Mg(2+).

Its subcellular location is the cytoplasm. The enzyme catalyses 3-methyl-2-oxobutanoate + (6R)-5,10-methylene-5,6,7,8-tetrahydrofolate + H2O = 2-dehydropantoate + (6S)-5,6,7,8-tetrahydrofolate. It participates in cofactor biosynthesis; (R)-pantothenate biosynthesis; (R)-pantoate from 3-methyl-2-oxobutanoate: step 1/2. Its function is as follows. Catalyzes the reversible reaction in which hydroxymethyl group from 5,10-methylenetetrahydrofolate is transferred onto alpha-ketoisovalerate to form ketopantoate. The sequence is that of 3-methyl-2-oxobutanoate hydroxymethyltransferase from Thermotoga sp. (strain RQ2).